The primary structure comprises 564 residues: Interactor of constitutive active ROPs 3 (564 aa).

Disordered regions lie at residues 1 to 73 (MQTQ…SRIT) and 88 to 135 (KAKD…SALE). The span at 33 to 44 (ESSSSPISATNR) shows a compositional bias: polar residues. 2 stretches are compositionally biased toward basic and acidic residues: residues 63–73 (VSEKKRPSRIT) and 98–123 (TSKK…KLEE). Coiled-coil stretches lie at residues 70–133 (SRIT…ETSA) and 231–514 (AETE…AATA). Residue Ser-533 is modified to Phosphoserine.

Belongs to the ICR family. In terms of assembly, interacts with ARAC11 in vitro. Expressed in flowers.

In terms of biological role, acts as a scaffold, mediating interaction of ROPs with different proteins. The polypeptide is Interactor of constitutive active ROPs 3 (ICR3) (Arabidopsis thaliana (Mouse-ear cress)).